The chain runs to 135 residues: Endocuticle structural glycoprotein SgAbd-2 (135 aa).

Pyrrolidone carboxylic acid is present on Q1. O-linked (HexNAc...) threonine glycans are attached at residues T11 and T100. Residues 32 to 102 (DGSYAYSYQT…AEGAHLPTPP (71 aa)) enclose the Chitin-binding type R&amp;R domain.

Its function is as follows. Component of the abdominal endocuticle. The sequence is that of Endocuticle structural glycoprotein SgAbd-2 from Schistocerca gregaria (Desert locust).